We begin with the raw amino-acid sequence, 315 residues long: Porphobilinogen deaminase (315 aa).

C245 bears the S-(dipyrrolylmethanemethyl)cysteine mark.

The protein belongs to the HMBS family. Monomer. Requires dipyrromethane as cofactor.

The enzyme catalyses 4 porphobilinogen + H2O = hydroxymethylbilane + 4 NH4(+). It participates in porphyrin-containing compound metabolism; protoporphyrin-IX biosynthesis; coproporphyrinogen-III from 5-aminolevulinate: step 2/4. It functions in the pathway porphyrin-containing compound metabolism; chlorophyll biosynthesis. Functionally, tetrapolymerization of the monopyrrole PBG into the hydroxymethylbilane pre-uroporphyrinogen in several discrete steps. The chain is Porphobilinogen deaminase from Prochlorococcus marinus (strain NATL1A).